A 147-amino-acid chain; its full sequence is Hemoglobin subunit epsilon (147 aa).

The Globin domain maps to 3–147 (HFTAEEKTAI…VASALAHKYH (145 aa)). Phosphoserine occurs at positions 14 and 51. Residues His64 and His93 each contribute to the heme b site.

It belongs to the globin family. In terms of tissue distribution, red blood cells.

Its function is as follows. Hemoglobin epsilon chain is an embryonic-type beta-type chain found in prenatal and neonatal marsupials. This is Hemoglobin subunit epsilon (HBE1) from Notamacropus eugenii (Tammar wallaby).